A 280-amino-acid chain; its full sequence is uncharacterized protein (280 aa).

3–29 contributes to the NADP(+) binding site; sequence KKIAIVTGASSGFGLLAAVKLARSFFV. S139 lines the substrate pocket. The active-site Proton acceptor is the Y152.

This sequence belongs to the short-chain dehydrogenases/reductases (SDR) family.

This is an uncharacterized protein from Bacillus subtilis (strain 168).